We begin with the raw amino-acid sequence, 612 residues long: Zinc metalloproteinase-disintegrin-like 2a (612 aa).

Positions 1 to 20 (MIQVLLVTICLAVFPYQGSS) are cleaved as a signal peptide. Positions 21–189 (IILGSGNVND…KKASQLNLTP (169 aa)) are excised as a propeptide. The Peptidase M12B domain occupies 199 to 395 (KYIELVIVAD…NRPPCILNKP (197 aa)). Residue Glu202 participates in Ca(2+) binding. Asn218 carries an N-linked (GlcNAc...) asparagine glycan. Asp286 contacts Ca(2+). Disulfide bonds link Cys310–Cys390, Cys350–Cys374, and Cys352–Cys357. His335 serves as a coordination point for Zn(2+). Residue Glu336 is part of the active site. Zn(2+)-binding residues include His339 and His345. The Ca(2+) site is built by Cys390, Asn393, Val405, Asn408, Phe410, Glu412, Glu415, and Asp418. Residues 403-489 (PPVCGNYFVE…DCPTDNFQRN (87 aa)) enclose the Disintegrin domain. 14 cysteine pairs are disulfide-bonded: Cys406-Cys435, Cys417-Cys430, Cys419-Cys425, Cys429-Cys452, Cys443-Cys449, Cys448-Cys474, Cys461-Cys481, Cys468-Cys500, Cys493-Cys505, Cys512-Cys562, Cys527-Cys573, Cys540-Cys550, Cys557-Cys599, and Cys593-Cys605. The D/ECD-tripeptide signature appears at 467-469 (ECD).

The protein belongs to the venom metalloproteinase (M12B) family. P-III subfamily. The cofactor is Zn(2+). In terms of tissue distribution, expressed by the venom gland.

Its subcellular location is the secreted. Functionally, snake venom metalloproteinase that impairs hemostasis in the envenomed animal. This Crotalus adamanteus (Eastern diamondback rattlesnake) protein is Zinc metalloproteinase-disintegrin-like 2a.